Consider the following 205-residue polypeptide: Imidazole glycerol phosphate synthase subunit HisH (205 aa).

Residues 1 to 205 enclose the Glutamine amidotransferase type-1 domain; it reads MITIVDYQMG…RFATAPVEVA (205 aa). Cysteine 79 serves as the catalytic Nucleophile. Catalysis depends on residues histidine 182 and glutamate 184.

In terms of assembly, heterodimer of HisH and HisF.

It is found in the cytoplasm. It carries out the reaction 5-[(5-phospho-1-deoxy-D-ribulos-1-ylimino)methylamino]-1-(5-phospho-beta-D-ribosyl)imidazole-4-carboxamide + L-glutamine = D-erythro-1-(imidazol-4-yl)glycerol 3-phosphate + 5-amino-1-(5-phospho-beta-D-ribosyl)imidazole-4-carboxamide + L-glutamate + H(+). The catalysed reaction is L-glutamine + H2O = L-glutamate + NH4(+). The protein operates within amino-acid biosynthesis; L-histidine biosynthesis; L-histidine from 5-phospho-alpha-D-ribose 1-diphosphate: step 5/9. IGPS catalyzes the conversion of PRFAR and glutamine to IGP, AICAR and glutamate. The HisH subunit catalyzes the hydrolysis of glutamine to glutamate and ammonia as part of the synthesis of IGP and AICAR. The resulting ammonia molecule is channeled to the active site of HisF. The polypeptide is Imidazole glycerol phosphate synthase subunit HisH (Rhodopirellula baltica (strain DSM 10527 / NCIMB 13988 / SH1)).